Here is an 886-residue protein sequence, read N- to C-terminus: Protein translocase subunit SecA (886 aa).

Residues Gln-81, Gly-99–Thr-103, and Asp-489 each bind ATP.

It belongs to the SecA family.

The protein resides in the plastid. It localises to the chloroplast stroma. It is found in the chloroplast thylakoid membrane. It carries out the reaction ATP + H2O + cellular proteinSide 1 = ADP + phosphate + cellular proteinSide 2.. Its function is as follows. Has a central role in coupling the hydrolysis of ATP to the transfer of proteins across the thylakoid membrane. The chain is Protein translocase subunit SecA from Phaeodactylum tricornutum (strain CCAP 1055/1).